We begin with the raw amino-acid sequence, 202 residues long: Prostamide/prostaglandin F synthase (202 aa).

Residue tyrosine 108 is modified to Phosphotyrosine.

It belongs to the peroxiredoxin-like PRXL2 family. Prostamide/prostaglandin F synthase subfamily.

It localises to the cytoplasm. The protein localises to the cytosol. The catalysed reaction is prostaglandin H2 + [thioredoxin]-dithiol = prostaglandin F2alpha + [thioredoxin]-disulfide. It catalyses the reaction prostamide F2alpha + [thioredoxin]-disulfide = prostamide H2 + [thioredoxin]-dithiol. Catalyzes the reduction of prostaglandin-ethanolamide H(2) (prostamide H(2)) to prostamide F(2alpha) with NADPH as proton donor. Also able to reduce prostaglandin H(2) to prostaglandin F(2alpha). The sequence is that of Prostamide/prostaglandin F synthase (PRXL2B) from Sus scrofa (Pig).